The sequence spans 220 residues: UPF0319 protein YccT (220 aa).

The N-terminal stretch at 1–20 (MKTGALATFLALCLPVTVFA) is a signal peptide.

Belongs to the UPF0319 family.

This is UPF0319 protein YccT from Salmonella agona (strain SL483).